The chain runs to 445 residues: Anthranilate N-benzoyltransferase protein 3 (445 aa).

Residues His-164 and Asp-392 each act as proton acceptor in the active site.

Belongs to the plant acyltransferase family. In terms of processing, N-terminus is blocked.

The enzyme catalyses anthranilate + benzoyl-CoA = N-benzoylanthranilate + CoA. It functions in the pathway phytoalexin biosynthesis; methoxydianthramide B biosynthesis. Catalyzes the formation of N-benzoylanthranilate, in the course of methoxydianthramide B, a phytoalexin. Phytoalexins are produced in response to infection by parasites, and are essential for the expression of disease resistance. The chain is Anthranilate N-benzoyltransferase protein 3 (HCBT3) from Dianthus caryophyllus (Carnation).